A 148-amino-acid polypeptide reads, in one-letter code: Hut operon positive regulatory protein (148 aa).

Belongs to the HutP family. As to quaternary structure, homohexamer.

In terms of biological role, antiterminator that binds to cis-acting regulatory sequences on the mRNA in the presence of histidine, thereby suppressing transcription termination and activating the hut operon for histidine utilization. The polypeptide is Hut operon positive regulatory protein (Bacillus velezensis (strain DSM 23117 / BGSC 10A6 / LMG 26770 / FZB42) (Bacillus amyloliquefaciens subsp. plantarum)).